We begin with the raw amino-acid sequence, 215 residues long: UPF0502 protein YceH (215 aa).

It belongs to the UPF0502 family.

The sequence is that of UPF0502 protein YceH from Salmonella paratyphi C (strain RKS4594).